Here is a 308-residue protein sequence, read N- to C-terminus: ADP-L-glycero-D-manno-heptose-6-epimerase (308 aa).

Residues 10 to 11, 31 to 32, Lys-38, Lys-53, 75 to 79, and Asn-92 each bind NADP(+); these read MI, DN, and EGACS. Tyr-140 (proton acceptor) is an active-site residue. Lys-144 lines the NADP(+) pocket. A substrate-binding site is contributed by Asn-169. NADP(+) is bound by residues Val-170 and Lys-178. Catalysis depends on Lys-178, which acts as the Proton acceptor. Substrate-binding positions include Ser-180, His-187, 201-204, Arg-209, and Tyr-272; that span reads FEGS.

It belongs to the NAD(P)-dependent epimerase/dehydratase family. HldD subfamily. Homopentamer. It depends on NADP(+) as a cofactor.

It carries out the reaction ADP-D-glycero-beta-D-manno-heptose = ADP-L-glycero-beta-D-manno-heptose. It participates in nucleotide-sugar biosynthesis; ADP-L-glycero-beta-D-manno-heptose biosynthesis; ADP-L-glycero-beta-D-manno-heptose from D-glycero-beta-D-manno-heptose 7-phosphate: step 4/4. Its function is as follows. Catalyzes the interconversion between ADP-D-glycero-beta-D-manno-heptose and ADP-L-glycero-beta-D-manno-heptose via an epimerization at carbon 6 of the heptose. The sequence is that of ADP-L-glycero-D-manno-heptose-6-epimerase from Actinobacillus pleuropneumoniae serotype 5b (strain L20).